We begin with the raw amino-acid sequence, 245 residues long: MGLVWRSRTSLVGQLIGLVRLVASFAAQLFYRPSDAVAEEYHKWYYGNLVWTKTTYMGINCWKSVSDMWNYQEILSELQPSLVIEFGTRYGGSAVYFANIMRQIGQPFKVLTVDNSHKALDPRARREPDVLFVESSSTDPAIAEQIQRLKNEYPGKIFAILDSDHSMNHVLAEMKLLRPLLSAGDYLVVEDSNINGHPVLPGFGPGPYEAIEAYEDEFPNDYKHDAERENKFGWTSAPNGFLIRN.

A signal peptide spans M1 to A38.

Belongs to the rhamnosyl O-methyltransferase family.

In terms of biological role, catalyzes the O-methylation of the hydroxyl group located on C-2 of the first rhamnosyl residue linked to the phenolic group of glycosylated phenolphthiocerol dimycocerosates (PGL) and p-hydroxybenzoic acid derivatives (p-HBAD). In Mycobacterium bovis (strain ATCC BAA-935 / AF2122/97), this protein is Rhamnosyl O-methyltransferase.